Consider the following 117-residue polypeptide: Crustacean hyperglycemic hormones 3 (117 aa).

An N-terminal signal peptide occupies residues methionine 1–alanine 24. 3 disulfide bridges follow: cysteine 50-cysteine 86, cysteine 66-cysteine 82, and cysteine 69-cysteine 95. Position 115 is a valine amide (valine 115).

Belongs to the arthropod CHH/MIH/GIH/VIH hormone family. Produced by the medulla terminalis X-organ in the eyestalks and transported to the sinus gland where they are stored and released.

The protein resides in the secreted. Its function is as follows. Hormone found in the sinus gland of isopods and decapods which controls the blood sugar level. Has a secretagogue action over the amylase released from the midgut gland. May act as a stress hormone and may be involved in the control of molting and reproduction. In Penaeus japonicus (Kuruma prawn), this protein is Crustacean hyperglycemic hormones 3.